The primary structure comprises 1047 residues: Carbamoyl phosphate synthase arginine-specific large chain (1047 aa).

Residues 1-401 (MPKRTDIQSV…GLQKAVRSLE (401 aa)) form a carboxyphosphate synthetic domain region. ATP-binding residues include R129, R169, G175, G176, K208, I210, E215, G241, V242, H243, Q284, and E298. Residues 133–327 (RQLMHELHEP…IARMAAKLSL (195 aa)) form the ATP-grasp 1 domain. Mg(2+)-binding residues include Q284, E298, and N300. Mn(2+) is bound by residues Q284, E298, and N300. The tract at residues 402–549 (IKTHGLSLPS…YSSWTGENDL (148 aa)) is oligomerization domain. Residues 550–933 (LLPEKAKERV…AFRKAFAWGE (384 aa)) form a carbamoyl phosphate synthetic domain region. The 190-residue stretch at 676-865 (YEFMRSVEVP…LITYTIDVLF (190 aa)) folds into the ATP-grasp 2 domain. The ATP site is built by R712, A750, E756, G781, V782, H783, S784, Q824, and E836. Q824, E836, and N838 together coordinate Mg(2+). 3 residues coordinate Mn(2+): Q824, E836, and N838. An allosteric domain region spans residues 934–1047 (EQTPALFRKK…PFLLPDVVMN (114 aa)). In terms of domain architecture, MGS-like spans 937 to 1047 (PALFRKKGSV…PFLLPDVVMN (111 aa)).

It belongs to the CarB family. Composed of two chains; the small (or glutamine) chain promotes the hydrolysis of glutamine to ammonia, which is used by the large (or ammonia) chain to synthesize carbamoyl phosphate. Tetramer of heterodimers (alpha,beta)4. Mg(2+) serves as cofactor. Mn(2+) is required as a cofactor.

It catalyses the reaction hydrogencarbonate + L-glutamine + 2 ATP + H2O = carbamoyl phosphate + L-glutamate + 2 ADP + phosphate + 2 H(+). It carries out the reaction hydrogencarbonate + NH4(+) + 2 ATP = carbamoyl phosphate + 2 ADP + phosphate + 2 H(+). Its pathway is amino-acid biosynthesis; L-arginine biosynthesis; carbamoyl phosphate from bicarbonate: step 1/1. Functionally, large subunit of the glutamine-dependent carbamoyl phosphate synthetase (CPSase). CPSase catalyzes the formation of carbamoyl phosphate from the ammonia moiety of glutamine, carbonate, and phosphate donated by ATP, constituting the first step of the biosynthetic pathway leading to arginine and/or urea. The large subunit (synthetase) binds the substrates ammonia (free or transferred from glutamine from the small subunit), hydrogencarbonate and ATP and carries out an ATP-coupled ligase reaction, activating hydrogencarbonate by forming carboxy phosphate which reacts with ammonia to form carbamoyl phosphate. The sequence is that of Carbamoyl phosphate synthase arginine-specific large chain from Halalkalibacterium halodurans (strain ATCC BAA-125 / DSM 18197 / FERM 7344 / JCM 9153 / C-125) (Bacillus halodurans).